The sequence spans 200 residues: COMM domain-containing protein 7 (200 aa).

Residues 133–200 (QLIDMEWKFG…RVRTSMECFC (68 aa)) enclose the COMM domain.

The protein belongs to the COMM domain-containing protein 7 family. In terms of assembly, component of the commander complex consisting of the CCC subcomplex and the retriever subcomplex. Component of the CCC (COMMD/CCDC22/CCDC93) subcomplex consisting of COMMD1, COMMD2, COMMD3, COMMD4, COMMD5, COMMD6, COMMD7, COMMD8, COMMD9, COMMD10, CCDC22 and CCDC93; within the complex forms a heterodimer with COMMD9. Interacts with RELA. Interacts with CCDC22, CCDC93, SCNN1B, CUL7. Widely expressed with highest expression in lung.

The protein resides in the cytoplasmic vesicle. Functionally, scaffold protein in the commander complex that is essential for endosomal recycling of transmembrane cargos; the commander complex is composed of the CCC subcomplex and the retriever subcomplex. May modulate activity of cullin-RING E3 ubiquitin ligase (CRL) complexes. Associates with the NF-kappa-B complex and suppresses its transcriptional activity. The chain is COMM domain-containing protein 7 (COMMD7) from Homo sapiens (Human).